Reading from the N-terminus, the 424-residue chain is S-adenosylmethionine synthase (424 aa).

Histidine 16 contacts ATP. Aspartate 18 is a binding site for Mg(2+). Glutamate 44 contributes to the K(+) binding site. Residues glutamate 57 and glutamine 100 each coordinate L-methionine. The segment at 100 to 110 is flexible loop; the sequence is QSPDIAQGVNT. ATP is bound by residues 175 to 177, 251 to 252, aspartate 260, 266 to 267, alanine 283, and lysine 287; these read DGK, KF, and RK. Residue aspartate 260 participates in L-methionine binding. Lysine 291 contributes to the L-methionine binding site.

This sequence belongs to the AdoMet synthase family. In terms of assembly, homotetramer; dimer of dimers. Mg(2+) is required as a cofactor. The cofactor is K(+).

It is found in the cytoplasm. It catalyses the reaction L-methionine + ATP + H2O = S-adenosyl-L-methionine + phosphate + diphosphate. It participates in amino-acid biosynthesis; S-adenosyl-L-methionine biosynthesis; S-adenosyl-L-methionine from L-methionine: step 1/1. In terms of biological role, catalyzes the formation of S-adenosylmethionine (AdoMet) from methionine and ATP. The overall synthetic reaction is composed of two sequential steps, AdoMet formation and the subsequent tripolyphosphate hydrolysis which occurs prior to release of AdoMet from the enzyme. The chain is S-adenosylmethionine synthase from Nostoc punctiforme (strain ATCC 29133 / PCC 73102).